We begin with the raw amino-acid sequence, 255 residues long: Ribose-5-phosphate isomerase (255 aa).

It belongs to the ribose 5-phosphate isomerase family.

The protein localises to the cytoplasm. The catalysed reaction is aldehydo-D-ribose 5-phosphate = D-ribulose 5-phosphate. It participates in carbohydrate degradation; pentose phosphate pathway; D-ribose 5-phosphate from D-ribulose 5-phosphate (non-oxidative stage): step 1/1. The chain is Ribose-5-phosphate isomerase (RKI1) from Eremothecium gossypii (strain ATCC 10895 / CBS 109.51 / FGSC 9923 / NRRL Y-1056) (Yeast).